A 405-amino-acid chain; its full sequence is Cysteine desulfurase IscS (405 aa).

Residues 75-76 (AT), Asn-156, Gln-184, and 204-206 (SAH) contribute to the pyridoxal 5'-phosphate site. Position 207 is an N6-(pyridoxal phosphate)lysine (Lys-207). Thr-244 serves as a coordination point for pyridoxal 5'-phosphate. Cys-329 serves as the catalytic Cysteine persulfide intermediate. Cys-329 serves as a coordination point for [2Fe-2S] cluster.

It belongs to the class-V pyridoxal-phosphate-dependent aminotransferase family. NifS/IscS subfamily. As to quaternary structure, homodimer. Forms a heterotetramer with IscU, interacts with other sulfur acceptors. Pyridoxal 5'-phosphate serves as cofactor.

The protein localises to the cytoplasm. It catalyses the reaction (sulfur carrier)-H + L-cysteine = (sulfur carrier)-SH + L-alanine. Its pathway is cofactor biosynthesis; iron-sulfur cluster biosynthesis. In terms of biological role, master enzyme that delivers sulfur to a number of partners involved in Fe-S cluster assembly, tRNA modification or cofactor biosynthesis. Catalyzes the removal of elemental sulfur atoms from cysteine to produce alanine. Functions as a sulfur delivery protein for Fe-S cluster synthesis onto IscU, an Fe-S scaffold assembly protein, as well as other S acceptor proteins. The sequence is that of Cysteine desulfurase IscS from Methylobacillus flagellatus (strain ATCC 51484 / DSM 6875 / VKM B-1610 / KT).